We begin with the raw amino-acid sequence, 527 residues long: Hopanoid C-2 methylase (527 aa).

The B12-binding domain maps to 36 to 148; that stretch reads VAAFMPPQGL…AKLTHDVTRP (113 aa). Positions 173 to 408 constitute a Radical SAM core domain; it reads AECSKYLLGS…HDQVVAMWKD (236 aa). The [4Fe-4S] cluster site is built by cysteine 189, cysteine 193, and cysteine 196.

It belongs to the radical SAM superfamily. The cofactor is [4Fe-4S] cluster.

Its function is as follows. Required for methylation of hopanoids at the C-2 position. This chain is Hopanoid C-2 methylase, found in Rhodopseudomonas palustris (strain TIE-1).